Reading from the N-terminus, the 93-residue chain is Cell division topological specificity factor (93 aa).

The protein belongs to the MinE family.

Prevents the cell division inhibition by proteins MinC and MinD at internal division sites while permitting inhibition at polar sites. This ensures cell division at the proper site by restricting the formation of a division septum at the midpoint of the long axis of the cell. This is Cell division topological specificity factor from Halorhodospira halophila (strain DSM 244 / SL1) (Ectothiorhodospira halophila (strain DSM 244 / SL1)).